The chain runs to 347 residues: Phosphoribosylformylglycinamidine cyclo-ligase (347 aa).

This sequence belongs to the AIR synthase family.

The protein localises to the cytoplasm. The catalysed reaction is 2-formamido-N(1)-(5-O-phospho-beta-D-ribosyl)acetamidine + ATP = 5-amino-1-(5-phospho-beta-D-ribosyl)imidazole + ADP + phosphate + H(+). It participates in purine metabolism; IMP biosynthesis via de novo pathway; 5-amino-1-(5-phospho-D-ribosyl)imidazole from N(2)-formyl-N(1)-(5-phospho-D-ribosyl)glycinamide: step 2/2. In Alkalilimnicola ehrlichii (strain ATCC BAA-1101 / DSM 17681 / MLHE-1), this protein is Phosphoribosylformylglycinamidine cyclo-ligase.